Reading from the N-terminus, the 404-residue chain is Ubiquitin-like modifier-activating enzyme 5 (404 aa).

ATP contacts are provided by G83, D104, K127, N150, and N184. Positions 226 and 229 each coordinate Zn(2+). C250 functions as the Glycyl thioester intermediate in the catalytic mechanism. Positions 303 and 308 each coordinate Zn(2+). The interval 372 to 393 (APEKSSETSEETVTAATADETS) is disordered. Low complexity predominate over residues 382–391 (ETVTAATADE).

It belongs to the ubiquitin-activating E1 family. UBA5 subfamily.

Its function is as follows. E1-like enzyme which activates UFM1. The sequence is that of Ubiquitin-like modifier-activating enzyme 5 from Drosophila sechellia (Fruit fly).